Here is a 309-residue protein sequence, read N- to C-terminus: Ribosomal RNA small subunit methyltransferase H (309 aa).

Residues 33–35, Asp-53, Phe-79, Asp-100, and Gln-107 contribute to the S-adenosyl-L-methionine site; that span reads GGH.

This sequence belongs to the methyltransferase superfamily. RsmH family.

It is found in the cytoplasm. It carries out the reaction cytidine(1402) in 16S rRNA + S-adenosyl-L-methionine = N(4)-methylcytidine(1402) in 16S rRNA + S-adenosyl-L-homocysteine + H(+). Specifically methylates the N4 position of cytidine in position 1402 (C1402) of 16S rRNA. The chain is Ribosomal RNA small subunit methyltransferase H from Clostridium botulinum (strain Langeland / NCTC 10281 / Type F).